We begin with the raw amino-acid sequence, 227 residues long: MAFLILLRHGKSVWNEKNLFTGWVDIPLSQQGIDEAIHAGQVIKDLPIDCIFTSSLVRSLMTALLAMTHHSSKKIPYIIHDDEQQKLMSRIYSDEEKSMIPLYRSSALNERMYGELQGKNKKETAEEFGEEQVKLWRRSYKISPPGGESLYDTGLRTVPYFQETIFPLLKNSKNVFISAHGNSLRSLIMDIEKLSEEEVLSLELPTGKPIVYLWTGHTFERHPEPLG.

Residues Arg8–Asn15, Thr21–Gly22, Arg58, Glu110–Tyr113, Lys121, Arg137–Arg138, and Gly181–Asn182 each bind substrate. Catalysis depends on His9, which acts as the Tele-phosphohistidine intermediate. Catalysis depends on Glu110, which acts as the Proton donor/acceptor.

This sequence belongs to the phosphoglycerate mutase family. BPG-dependent PGAM subfamily.

It catalyses the reaction (2R)-2-phosphoglycerate = (2R)-3-phosphoglycerate. It participates in carbohydrate degradation; glycolysis; pyruvate from D-glyceraldehyde 3-phosphate: step 3/5. Its function is as follows. Catalyzes the interconversion of 2-phosphoglycerate and 3-phosphoglycerate. This chain is 2,3-bisphosphoglycerate-dependent phosphoglycerate mutase, found in Chlamydia caviae (strain ATCC VR-813 / DSM 19441 / 03DC25 / GPIC) (Chlamydophila caviae).